The sequence spans 2035 residues: Ral GTPase-activating protein subunit alpha-1 (2035 aa).

A disordered region spans residues 343–384 (LVSREESKNDTVDKADKTAEPEQSHSNTSTLTEREPSSSSLC). Residues 345 to 365 (SREESKNDTVDKADKTAEPEQ) show a composition bias toward basic and acidic residues. Residues 366-384 (SHSNTSTLTEREPSSSSLC) are compositionally biased toward polar residues. A phosphoserine mark is found at Ser-710 and Ser-720. Residues 714 to 754 (SFSRGWSRDQPGQAPMRQRSATTTGSPGTEKARSIVRQKTV) are disordered. Thr-753 bears the Phosphothreonine mark. Ser-772 is subject to Phosphoserine. At Thr-777 the chain carries Phosphothreonine. Residue Ser-796 is modified to Phosphoserine. Residues 807–817 (ERAKVNKEDTS) show a composition bias toward basic and acidic residues. Disordered regions lie at residues 807-834 (ERAK…SANV) and 848-911 (SGNA…SHSD). Polar residues-rich tracts occupy residues 824–833 (NSETGGSSAN) and 849–862 (GNAS…SSPG). 3 positions are modified to phosphoserine: Ser-859, Ser-860, and Ser-863. Residues 894 to 911 (SPASAGSSDLMSSDSHSD) show a composition bias toward low complexity. Phosphoserine is present on residues Ser-985, Ser-989, Ser-993, and Ser-999. The interval 986–1008 (ESASPVHSALGSRSQTPSPSTLN) is disordered. Phosphothreonine is present on Thr-1001. A phosphoserine mark is found at Ser-1003 and Ser-1477. The minimal domain that binds to TCF3/E12 stretch occupies residues 1326 to 2034 (FTNKTVAHVA…PYHHFPADAD (709 aa)). Residues 1713-1746 (SEKQENDVINAILKQYTEEKEFVEKHFNDLNMKA) are a coiled coil. A Rap-GAP domain is found at 1795 to 2003 (LRNLDSRQCR…EERARYLQTI (209 aa)).

As to quaternary structure, component of the heterodimeric RalGAP1 complex with RALGAPB. Heterodimerization is required for activity. Interacts with the HLH region of TCF3/isoform E12. As to expression, highly expressed in brain, thymus and testis with lower levels in lung and spleen and barely detectable in heart or liver (at protein level).

It localises to the cytoplasm. The protein localises to the nucleus. Its function is as follows. Catalytic subunit of the heterodimeric RalGAP1 complex which acts as a GTPase activator for the Ras-like small GTPases RALA and RALB. The protein is Ral GTPase-activating protein subunit alpha-1 (Ralgapa1) of Rattus norvegicus (Rat).